The chain runs to 299 residues: N-acetylmuramic acid 6-phosphate etherase (299 aa).

The SIS domain occupies 54-217; it reads TIAQYKKGGR…STITMVGVGK (164 aa). Residue E82 is the Proton donor of the active site. E113 is an active-site residue.

Belongs to the GCKR-like family. MurNAc-6-P etherase subfamily. In terms of assembly, homodimer.

It carries out the reaction N-acetyl-D-muramate 6-phosphate + H2O = N-acetyl-D-glucosamine 6-phosphate + (R)-lactate. It participates in amino-sugar metabolism; N-acetylmuramate degradation. In terms of biological role, specifically catalyzes the cleavage of the D-lactyl ether substituent of MurNAc 6-phosphate, producing GlcNAc 6-phosphate and D-lactate. The sequence is that of N-acetylmuramic acid 6-phosphate etherase from Staphylococcus aureus (strain bovine RF122 / ET3-1).